The primary structure comprises 119 residues: Large ribosomal subunit protein uL22 (119 aa).

This sequence belongs to the universal ribosomal protein uL22 family. In terms of assembly, part of the 50S ribosomal subunit.

Its function is as follows. This protein binds specifically to 23S rRNA; its binding is stimulated by other ribosomal proteins, e.g. L4, L17, and L20. It is important during the early stages of 50S assembly. It makes multiple contacts with different domains of the 23S rRNA in the assembled 50S subunit and ribosome. In terms of biological role, the globular domain of the protein is located near the polypeptide exit tunnel on the outside of the subunit, while an extended beta-hairpin is found that lines the wall of the exit tunnel in the center of the 70S ribosome. This is Large ribosomal subunit protein uL22 from Rickettsia felis (strain ATCC VR-1525 / URRWXCal2) (Rickettsia azadi).